Reading from the N-terminus, the 186-residue chain is MRKEIRIAGFGGQGVILAGIVLGKAASLYDGLYAVQTQSYGPEARGGASRAEVVISDEEIDYPKVQSPDILVAMSHQALLTYMDDLKAGGTLIVDPDMVIENEIQDFVEERNISYFRAPATRTAEEKVGITIVANMVMIGALTEATGVVSVRAAEEAIKNSVPPGTEEKNIMAFQAGRELIMEGQK.

As to quaternary structure, heterotetramer of the KorA, KorB, KorC and KorD subunits.

It catalyses the reaction 2 oxidized [2Fe-2S]-[ferredoxin] + 2-oxoglutarate + CoA = succinyl-CoA + 2 reduced [2Fe-2S]-[ferredoxin] + CO2 + H(+). In Methanothermobacter marburgensis (strain ATCC BAA-927 / DSM 2133 / JCM 14651 / NBRC 100331 / OCM 82 / Marburg) (Methanobacterium thermoautotrophicum), this protein is 2-oxoglutarate synthase subunit KorC (korC).